The following is a 525-amino-acid chain: ALBINO3-like protein 2, chloroplastic (525 aa).

Helical transmembrane passes span 99–119, 167–187, 217–237, and 262–282; these read WMII…LLIL, LWFF…MASI, FGPV…QISF, and ILSV…LVYW. 4 TPR repeats span residues 346 to 379, 380 to 413, 425 to 458, and 467 to 500; these read PEEL…DPGY, VRGL…LLDE, MLAS…REPG, and FEAL…NPAY.

Belongs to the OXA1/ALB3/YidC (TC 2.A.9.2) family.

The protein localises to the plastid. The protein resides in the chloroplast thylakoid membrane. Functionally, probably required for the insertion of integral membrane proteins into the chloroplast thylakoid membranes. This Arabidopsis thaliana (Mouse-ear cress) protein is ALBINO3-like protein 2, chloroplastic (ALB3L2).